A 423-amino-acid polypeptide reads, in one-letter code: G protein-activated inward rectifier potassium channel 2 (423 aa).

Residues 1–89 lie on the Cytoplasmic side of the membrane; sequence MAKLTESMTN…IFTTLVDLKW (89 aa). S16 and S23 each carry phosphoserine. Residues 90 to 114 traverse the membrane as a helical segment; sequence RFNLLIFVMVYTVTWLFFGMIWWLI. Residues 115 to 138 lie on the Extracellular side of the membrane; sequence AYIRGDMDHIEDPSWTPCVTNLNG. The helical; Pore-forming intramembrane region spans 139 to 150; sequence FVSAFLFSIETE. Residues 151-157 constitute an intramembrane region (pore-forming); the sequence is TTIGYGY. The Selectivity filter signature appears at 152-157; the sequence is TIGYGY. At 158–166 the chain is on the extracellular side; that stretch reads RVITDKCPE. Residues 167–188 traverse the membrane as a helical segment; sequence GIILLLIQSVLGSIVNAFMVGC. The Cytoplasmic segment spans residues 189–423; sequence MFVKISQPKK…VANLENESKV (235 aa). The interval 390 to 423 is disordered; sequence NQHAELETEEEEKNLEEQTERNGDVANLENESKV. Positions 420–423 match the PDZ-binding motif; the sequence is ESKV.

Belongs to the inward rectifier-type potassium channel (TC 1.A.2.1) family. KCNJ6 subfamily. Associates with KCNJ3/GIRK1 or KCNJ5/GRIK4 to form a G-protein-activated heteromultimer pore-forming unit. The resulting inward current is much larger. Interacts (via PDZ-binding motif) with SNX27 (via PDZ domain); the interaction is required when endocytosed to prevent degradation in lysosomes and promote recycling to the plasma membrane. In terms of tissue distribution, most abundant in cerebellum, and to a lesser degree in islets and exocrine pancreas.

The protein localises to the membrane. The enzyme catalyses K(+)(in) = K(+)(out). Its activity is regulated as follows. Activated by phosphatidylinositol 4,5 biphosphate (PtdIns(4,5)P2). Functionally, inward rectifier potassium channels are characterized by a greater tendency to allow potassium to flow into the cell rather than out of it. Their voltage dependence is regulated by the concentration of extracellular potassium; as external potassium is raised, the voltage range of the channel opening shifts to more positive voltages. The inward rectification is mainly due to the blockage of outward current by internal magnesium. This potassium channel may be involved in the regulation of insulin secretion by glucose and/or neurotransmitters acting through G-protein-coupled receptors. This is G protein-activated inward rectifier potassium channel 2 (KCNJ6) from Homo sapiens (Human).